A 537-amino-acid polypeptide reads, in one-letter code: MDCKVVSLNEKDQFIPKIKSSDPVITGLFQYDAAQQTSFEKRMSKENNGREAALANVIREYMSDLKLSSEQELNIQHLANGSKVVIGGQQAGLFGGPLYTFHKIFSIITLSKELTDTHKQQVVPVFWIAGEDHDFDEVNHTFVYNENHGSLHKVKYHTMEMPETTVSRYYPDKAELKQTLKTMFIHMKETVHTQGLLEICDRIIDQYDSWTDMFKALLHETFKAYGVLFIDAQFEPLRKMEAPMFKKILKKHQLLDDAFRATQQRTQNQGLNAMIQTDTNVHLFLHDENMRQLVSYDGKHFKLNKTDKTYIKEEIINIAENQPELFSNNVVTRPLMEEWLFNTVAFVGGPSEIKYWAELKDVFELFDVEMPIVMPRLRITYLNDRIEKLLSKYNIPLEKVLVDGVEGERSKFIREQASHQFIEKVEGMIEQQRRLNKDLLDEVAGNQNNINLVNKNNEIHIQQYDYLLKRYLLNIERENDISMKQFREIQETLHPMGGLQERIWNPLQILNDFGTDVFKPSTYPPLSYTFDHIIIKP.

Residues 422 to 450 (IEKVEGMIEQQRRLNKDLLDEVAGNQNNI) adopt a coiled-coil conformation.

Belongs to the BshC family.

Its function is as follows. Involved in bacillithiol (BSH) biosynthesis. May catalyze the last step of the pathway, the addition of cysteine to glucosamine malate (GlcN-Mal) to generate BSH. The polypeptide is Putative cysteine ligase BshC (Staphylococcus aureus (strain USA300)).